The chain runs to 235 residues: Post-translational flagellin modification protein B (235 aa).

It belongs to the CMP-NeuNAc synthase family.

Required for biosynthesis of LAH modification in the post-translational modification of Campylobacter coli flagellin. In Campylobacter coli, this protein is Post-translational flagellin modification protein B (ptmB).